The following is an 816-amino-acid chain: MKLLKFGGTSLANAEKFLSVSSIIEENTQTDQIAVVLSAPAKITNYLVKIIENTIKNNQILETVHLAENIFMQLINNFLNIQSNFPHKEIEKIIKKEFNELKNIIQGILLLKQCPDNIRAIIISRGEILSVFIMKSILQSKNYNVTIINPVKNLVAIGDNYLDSTVDISESKKNIQNMNINQSNIILMAGFIAGNKDKKLVVLGRNGSDYSAAVLAACLDANCCEIWTDVDGVFTSDPRKVPNARLLKSISYQEAMELSYFGAKVLHPRTIEPIAQFKIPCLIKNTNNVKSIGTLICEQNCSEKDFLKGVTHLDEIAMFNISGPHIKDVGSVISRIFTMMSRGNIKILLITQSSSENKINFCVYEHDIYKILYLFNKEFQLELKDGLLNPFKIKKNLSILSIVGSNIYKKHNIASKIFSVLGALKINVIAISQGSSKHSISLVIKKENILKAVQHVHNTLFFNKKTIHMFLIGIGGIGSTLLNQILKQKQFLDKKNIEIKICAIANSKKILLLDNTNDLSNWKNDFKKSTQKFNLELLNNLIKNNHFSNSVIVDCTSSQLLSEQYVNFIDNNFHVVTSNKKANTSEWNYYKKIRKSVAQTGKKFLYETNVGAGLPVIETLQNLFKSGDNLICFKGILSGSLSFIFGRLEEGILLSQATREAKELGFTEPNPCDDLSGIDVARKLLILARESGYNIELKDIKIEPLLPNNFKIYEDTDKFLLKLKELDVYFSNKIKQALNVGNVLRFVATIEQKRQFFIKLEEVNINNPLYKVKNGENALAFYTNYYQPIPLVLRGYGAGNNVTASGVFSDLLRTLS.

Residues 1 to 250 are aspartokinase; that stretch reads MKLLKFGGTS…VPNARLLKSI (250 aa). The segment at 251 to 471 is interface; that stretch reads SYQEAMELSY…FNKKTIHMFL (221 aa). The region spanning 402 to 479 is the ACT domain; it reads IVGSNIYKKH…FLIGIGGIGS (78 aa). The homoserine dehydrogenase stretch occupies residues 472–816; it reads IGIGGIGSTL…VFSDLLRTLS (345 aa). NAD(+)-binding residues include G476, I477, and A505. An NADP(+)-binding site is contributed by I477. Position 477 (I477) interacts with NADPH. The NADP(+) site is built by K508 and T556. T556 contributes to the NAD(+) binding site. 4 residues coordinate NADPH: T556, S557, S578, and K580. Residues S578 and K580 each contribute to the NADP(+) site. The Na(+) site is built by E607, V610, A612, and L614. NADP(+)-binding residues include G665 and E668. E668 and D679 together coordinate L-homoserine. K683 (proton donor) is an active-site residue. G799 is a binding site for NAD(+). G799 contributes to the NADP(+) binding site. NADPH is bound at residue G799.

This sequence in the N-terminal section; belongs to the aspartokinase family. In the C-terminal section; belongs to the homoserine dehydrogenase family. In terms of assembly, homotetramer. Requires a metal cation as cofactor.

It carries out the reaction L-homoserine + NADP(+) = L-aspartate 4-semialdehyde + NADPH + H(+). The enzyme catalyses L-homoserine + NAD(+) = L-aspartate 4-semialdehyde + NADH + H(+). The catalysed reaction is L-aspartate + ATP = 4-phospho-L-aspartate + ADP. The protein operates within amino-acid biosynthesis; L-lysine biosynthesis via DAP pathway; (S)-tetrahydrodipicolinate from L-aspartate: step 1/4. It functions in the pathway amino-acid biosynthesis; L-methionine biosynthesis via de novo pathway; L-homoserine from L-aspartate: step 1/3. It participates in amino-acid biosynthesis; L-methionine biosynthesis via de novo pathway; L-homoserine from L-aspartate: step 3/3. Its pathway is amino-acid biosynthesis; L-threonine biosynthesis; L-threonine from L-aspartate: step 1/5. The protein operates within amino-acid biosynthesis; L-threonine biosynthesis; L-threonine from L-aspartate: step 3/5. Functionally, bifunctional aspartate kinase and homoserine dehydrogenase that catalyzes the first and the third steps toward the synthesis of lysine, methionine and threonine from aspartate. The sequence is that of Bifunctional aspartokinase/homoserine dehydrogenase (thrA) from Buchnera aphidicola subsp. Acyrthosiphon pisum (strain APS) (Acyrthosiphon pisum symbiotic bacterium).